Here is a 356-residue protein sequence, read N- to C-terminus: MASKKQRIGVLTSGGDAPGLNAVIRAVVKSASSLGWEVIGIHDGFEGLLGTKSYRVLTNADVQGLLPRGGTILRTTNKGHFGPRRSDELSEADPYVRAVKAIEEMGLRALITIGGEGTQRIALELHKLGAPVIGVPKTIDNDLAGTDRTFGFDTALQVATDAIDRLHTTAASHNRVMVLEVMGRHTGWIALHAGLAGGADVILIPEIPFTIERVAEKVHARDAQGSAFSIIVVAEGARPRGGSEMYIAEGRLGGIGHWVGEQLERLTGKDVRVVVLGHLQRGGSPSPYDRLLSTRYGAAAVQAAARGIYGEMVALRGQDIVTVPLAEACGYLNRVRPHSDLVLCARSLGIVFGDEL.

Residues Gly-15, Lys-78–Gly-79, and Gly-115–Thr-118 each bind ATP. Glu-116 is a binding site for Mg(2+). Substrate-binding positions include Thr-138 to Asp-140, Arg-175, Met-182 to Arg-184, Glu-235, Arg-272, and His-278 to Arg-281. Catalysis depends on Asp-140, which acts as the Proton acceptor.

This sequence belongs to the phosphofructokinase type A (PFKA) family. Mixed-substrate PFK group III subfamily. In terms of assembly, homodimer or homotetramer. The cofactor is Mg(2+).

Its subcellular location is the cytoplasm. It catalyses the reaction beta-D-fructose 6-phosphate + ATP = beta-D-fructose 1,6-bisphosphate + ADP + H(+). Its pathway is carbohydrate degradation; glycolysis; D-glyceraldehyde 3-phosphate and glycerone phosphate from D-glucose: step 3/4. Functionally, catalyzes the phosphorylation of D-fructose 6-phosphate to fructose 1,6-bisphosphate by ATP, the first committing step of glycolysis. The polypeptide is ATP-dependent 6-phosphofructokinase (Chloroflexus aggregans (strain MD-66 / DSM 9485)).